Consider the following 360-residue polypeptide: MTTTLQQRESASLWEQFCQWVTSTNNRIYVGWFGTLMIPTLLTATTCFIIAFIAAPPVDIDGIREPVAGSLLYGNNIISGAVVPSSNAIGLHFYPIWEAASLDEWLYNGGPYQLVVFQFLIGIFCYMGRQWELSYRLGMRPWICVAYSAPVSARTAVFLIYPIGQGSFSDGMPLGISGTFNFMIVFQAEHNILMHPFHMLGVAGVFGGSLFSAMHGSLVTSSLVRETTEVESQNYGYKFGQEEETYNIVAAHGYFGRLIFQYASFNNSRSLHFFLGAWPVIGIWFTAMGVSTMAFNLNGFNFNQSILDSQGRVIGTWADVLNRANIGFEVMHERNAHNFPLDLASGEQAPVALTAPAING.

Helical transmembrane passes span 29-46 (YVGW…TATT), 118-133 (QFLI…QWEL), and 142-156 (WICV…ARTA). Tyr-126 contacts pheophytin a. [CaMn4O5] cluster is bound by residues Asp-170 and Glu-189. A helical transmembrane segment spans residues 197 to 218 (FHMLGVAGVFGGSLFSAMHGSL). His-198 provides a ligand contact to chlorophyll a. A quinone contacts are provided by residues His-215 and 264–265 (SF). His-215 serves as a coordination point for Fe cation. His-272 provides a ligand contact to Fe cation. A helical transmembrane segment spans residues 274 to 288 (FLGAWPVIGIWFTAM). [CaMn4O5] cluster is bound by residues His-332, Glu-333, Asp-342, and Ala-344. Residues 345–360 (SGEQAPVALTAPAING) constitute a propeptide that is removed on maturation.

Belongs to the reaction center PufL/M/PsbA/D family. PSII is composed of 1 copy each of membrane proteins PsbA, PsbB, PsbC, PsbD, PsbE, PsbF, PsbH, PsbI, PsbJ, PsbK, PsbL, PsbM, PsbT, PsbX, PsbY, PsbZ, Psb30/Ycf12, peripheral proteins PsbO, CyanoQ (PsbQ), PsbU, PsbV and a large number of cofactors. It forms dimeric complexes. The cofactor is The D1/D2 heterodimer binds P680, chlorophylls that are the primary electron donor of PSII, and subsequent electron acceptors. It shares a non-heme iron and each subunit binds pheophytin, quinone, additional chlorophylls, carotenoids and lipids. D1 provides most of the ligands for the Mn4-Ca-O5 cluster of the oxygen-evolving complex (OEC). There is also a Cl(-1) ion associated with D1 and D2, which is required for oxygen evolution. The PSII complex binds additional chlorophylls, carotenoids and specific lipids.. Post-translationally, tyr-161 forms a radical intermediate that is referred to as redox-active TyrZ, YZ or Y-Z. C-terminally processed by CtpA; processing is essential to allow assembly of the oxygen-evolving complex and thus photosynthetic growth.

It is found in the cellular thylakoid membrane. The enzyme catalyses 2 a plastoquinone + 4 hnu + 2 H2O = 2 a plastoquinol + O2. Its function is as follows. Photosystem II (PSII) is a light-driven water:plastoquinone oxidoreductase that uses light energy to abstract electrons from H(2)O, generating O(2) and a proton gradient subsequently used for ATP formation. It consists of a core antenna complex that captures photons, and an electron transfer chain that converts photonic excitation into a charge separation. The D1/D2 (PsbA/PsbD) reaction center heterodimer binds P680, the primary electron donor of PSII as well as several subsequent electron acceptors. This Synechocystis sp. (strain PCC 6714) (Aphanocapsa sp. (strain PCC 6714)) protein is Photosystem II protein D1.